The primary structure comprises 400 residues: Argininosuccinate synthase (400 aa).

ATP is bound by residues 10–18 (AYSGGVDTS) and Ala-38. Residue Tyr-89 coordinates L-citrulline. Gly-119 is an ATP binding site. L-aspartate is bound by residues Thr-121, Asn-125, and Asp-126. Asn-125 lines the L-citrulline pocket. L-citrulline contacts are provided by Arg-129, Ser-177, Ser-186, Glu-262, and Tyr-274.

The protein belongs to the argininosuccinate synthase family. Type 1 subfamily. Homotetramer.

The protein localises to the cytoplasm. The catalysed reaction is L-citrulline + L-aspartate + ATP = 2-(N(omega)-L-arginino)succinate + AMP + diphosphate + H(+). Its pathway is amino-acid biosynthesis; L-arginine biosynthesis; L-arginine from L-ornithine and carbamoyl phosphate: step 2/3. With respect to regulation, activity decreases to 53.9% and 18.4% in the presence of 1 mM and 5 mM arginine, respectively. Activity also decreases to 80.1%, 78.1% and 92.1% in the presence of 5 mM ornithine, lysine and succinate, respectively. Activity does not decrease in the presence of glutamate, glutamine or asparagine. In terms of biological role, catalyzes the condensation of citrulline and aspartate into argininosuccinate, the immediate precursor of arginine. SyArgG is the rate-limiting step in arginine biosynthesis in Synechocystis PCC 6803. In Synechocystis sp. (strain ATCC 27184 / PCC 6803 / Kazusa), this protein is Argininosuccinate synthase.